The following is a 272-amino-acid chain: Putative hydro-lyase BRADO2538 (272 aa).

This sequence belongs to the D-glutamate cyclase family.

The protein is Putative hydro-lyase BRADO2538 of Bradyrhizobium sp. (strain ORS 278).